The chain runs to 222 residues: MEELTERQREILSFIVKETETRGFPPTIREIGEHMDIRSTNGVNDHLKALERKGYLNRGEQQSRSLVATKRARLLLGLGARKDSGMVEIPLLGKVAAGAPLLAQENMEDSVKIDSFLLGGVNGREVFALRVKGQSMIDDGIHDGDYLFVKKTPSAQPGEIVVALIEDEATVKRYYPEGDRIRFQPANATMQPIYVSRAEFRSTMILGQVVGVYRKLQGGRTP.

The H-T-H motif DNA-binding region spans isoleucine 28–lysine 48. Catalysis depends on for autocatalytic cleavage activity residues serine 135 and lysine 172.

Belongs to the peptidase S24 family. As to quaternary structure, homodimer.

The enzyme catalyses Hydrolysis of Ala-|-Gly bond in repressor LexA.. Functionally, represses a number of genes involved in the response to DNA damage (SOS response), including recA and lexA. In the presence of single-stranded DNA, RecA interacts with LexA causing an autocatalytic cleavage which disrupts the DNA-binding part of LexA, leading to derepression of the SOS regulon and eventually DNA repair. The protein is LexA repressor of Myxococcus xanthus (strain DK1622).